The following is a 554-amino-acid chain: Valerianol synthase TPS1G (554 aa).

Residues D307 and D311 each contribute to the Mg(2+) site. The short motif at 326–330 (VQRWD) is the DDXXD motif element. Mg(2+) is bound by residues D452, S456, and E460.

Belongs to the terpene synthase family. Mg(2+) is required as a cofactor.

The catalysed reaction is (2E,6E)-farnesyl diphosphate + H2O = valerianol + diphosphate. It functions in the pathway secondary metabolite biosynthesis; terpenoid biosynthesis. In terms of biological role, terpene synthase that catalyzes the biosynthesis of the terpene valerianol, which is a volatile compound of floral scent. The polypeptide is Valerianol synthase TPS1G (Camellia hiemalis (Camellia)).